A 664-amino-acid chain; its full sequence is Intraflagellar transport protein 70B (664 aa).

7 TPR repeats span residues aspartate 11–serine 44, arginine 45–leucine 78, tyrosine 153–glutamine 186, aspartate 188–glutamine 220, leucine 385–threonine 418, isoleucine 423–histidine 456, and valine 458–asparagine 491. Residues tyrosine 507–aspartate 534 are a coiled coil. Residues cysteine 543–lysine 576 form a TPR 8 repeat.

Belongs to the TTC30/dfy-1/fleer family. As to quaternary structure, interacts with the IFT B complex components IFT27, IFT46, IFT74, IFT52, IFT57, IFT80, IFT81 and IFT88. Interacts with KIF17.

The protein localises to the cell projection. Its subcellular location is the cilium. Its function is as follows. Required for polyglutamylation of axonemal tubulin. Plays a role in anterograde intraflagellar transport (IFT), the process by which cilia precursors are transported from the base of the cilium to the site of their incorporation at the tip. The chain is Intraflagellar transport protein 70B (Ift70b) from Mus musculus (Mouse).